The primary structure comprises 590 residues: Myo-inositol transporter 3C (590 aa).

The Cytoplasmic segment spans residues 1–63 (MSRTPSSLDK…GEDKVTPYLC (63 aa)). The helical transmembrane segment at 64–86 (FLISASAIAGFLFGYDTGVVGVA) threads the bilayer. Topologically, residues 87–105 (LPLVGTDLGGSVLSSSQQE) are extracellular. The helical transmembrane segment at 106–126 (IITAGTTIGAIFGSAILGGWG) threads the bilayer. At 127 to 132 (DRLGRK) the chain is on the cytoplasmic side. A helical membrane pass occupies residues 133–153 (VAILIADVFFTVGAVLIAASY). Residues 154 to 162 (SVPQMIVGR) are Extracellular-facing. The chain crosses the membrane as a helical span at residues 163–183 (IVLGVGVGGAAAIAPLFITET). Residues 184–192 (APTAVRGRC) lie on the Cytoplasmic side of the membrane. A helical membrane pass occupies residues 193–213 (IGVNAFFIPFGQVISEAIGAG). Topologically, residues 214–222 (VQDMKNGWR) are extracellular. Residues 223–243 (LLFALGAVPSLFQLILFHYLP) traverse the membrane as a helical segment. Over 244-325 (ESPRILILRG…TVSLIQMAGQ (82 aa)) the chain is Cytoplasmic. A helical membrane pass occupies residues 326–346 (LSGFNTLLYYAGTLFSLLGLT). Over 347-349 (NPA) the chain is Extracellular. A helical membrane pass occupies residues 350–370 (LGGLIPAGTNAFFVLVGMTLV). Residues 371–376 (DKVGRR) are Cytoplasmic-facing. The chain crosses the membrane as a helical span at residues 377 to 397 (GLLMFGVPIMLAGLVWNIVAF). Topologically, residues 398-417 (HYLCIPTGGLLDTSYKYDTK) are extracellular. The helical transmembrane segment at 418 to 438 (LVGIVIGGIVFFTTGFGLTYS) threads the bilayer. The Cytoplasmic segment spans residues 439–454 (HLAWYQSEFLALEVRS). The helical transmembrane segment at 455-475 (VGSGIATTANWVANLVVSVSY) threads the bilayer. The Extracellular portion of the chain corresponds to 476–485 (LTELETLTPS). The helical transmembrane segment at 486 to 506 (GTYGLYLGFSVVFFIFAVFCY) threads the bilayer. The Cytoplasmic segment spans residues 507–590 (PETKQLSIDE…NGAKRFPISR (84 aa)).

Belongs to the major facilitator superfamily. Sugar transporter (TC 2.A.1.1) family.

It localises to the cell membrane. The enzyme catalyses myo-inositol(out) + H(+)(out) = myo-inositol(in) + H(+)(in). Functionally, major transporter for myo-inositol. Plays a role in the traversal of the host blood-brain barrier. In Cryptococcus neoformans var. grubii serotype A (strain H99 / ATCC 208821 / CBS 10515 / FGSC 9487) (Filobasidiella neoformans var. grubii), this protein is Myo-inositol transporter 3C.